Reading from the N-terminus, the 571-residue chain is Chondroitin sulfate proteoglycan 5 (571 aa).

Residues 1–30 (MGRAGGGGPGWGPPPVLLLLGVTLVLTAGA) form the signal peptide. Topologically, residues 31–428 (VPAREAGSAI…SIITDFQVMC (398 aa)) are extracellular. A glycan (O-linked (Xyl...) (chondroitin sulfate) serine) is linked at S38. N57 carries an N-linked (GlcNAc...) asparagine glycan. The interval 57–91 (NDTREEAGLPAAGEDETSWTERGSELAAVGPGVGP) is disordered. The O-linked (GalNAc...) threonine glycan is linked to T76. S123 carries an O-linked (Xyl...) (chondroitin sulfate) serine glycan. A glycan (O-linked (GalNAc...) threonine) is linked at T132. Disordered stretches follow at residues 137 to 169 (DEALGSSTMPPAIPEATEASGPPSPTLRDKPSL), 186 to 254 (GGST…TPSW), and 279 to 357 (DDLE…DLAT). S143 is a glycosylation site (O-linked (GalNAc...) serine). O-linked (GalNAc...) threonine glycosylation is found at T144 and T153. S156 and S160 each carry an O-linked (GalNAc...) serine glycan. T162 and T198 each carry an O-linked (GalNAc...) threonine glycan. Acidic residues predominate over residues 214–223 (IDIDYFEGLD). T240 carries O-linked (GalNAc...) threonine glycosylation. Residues 270–306 (DFYPTTSFYDDLEEEEEEEEDKDAVGGGDLEDESDLL) form an interaction with TNC and TNR region. A compositionally biased stretch (acidic residues) spans 279–291 (DDLEEEEEEEEDK). O-linked (GalNAc...) threonine glycosylation is found at T318 and T322. A glycan (N-linked (GlcNAc...) asparagine) is linked at N372. The EGF-like domain occupies 376–418 (RSVCDLFPSYCHNGGQCYLVENIGAFCRCNTQDYIWHKGMRCE). 3 disulfides stabilise this stretch: C379-C392, C386-C402, and C404-C417. Residues 429–449 (VAVGSAALVLLLLFMMTVFFA) form a helical membrane-spanning segment. The tract at residues 447 to 465 (FFAKKLYLLKTENTKLRRT) is interaction with GOPC. The Cytoplasmic portion of the chain corresponds to 450–571 (KKLYLLKTEN…EVNCLQNNLT (122 aa)). Residues S472, S480, S488, and S548 each carry the phosphoserine modification. Residues 538–563 (EESFNIQNSMSPKLEGGKGDQDDLEV) are disordered.

As to quaternary structure, interacts with ERBB3 and GOPC. Binds TNR and probably TNC. Interacts with MDK; this interaction is independent of the presence of chondroitin sulfate chains and promotes elongation of oligodendroglial precursor-like cells. N-glycosylated. Post-translationally, O-glycosylated; contains chondroitin sulfate glycans. Part-time proteoglycan, expressed in part as a proteoglycan exhibiting chondroitin sulfate glycans and in part as a non-proteoglycan form. The relative amount of both forms depends on tissues and tissue maturation. In terms of processing, phosphorylated; in intracellular and extracellular parts. As to expression, expressed in cerebral cortex and cerebellum. Expressed in retina (at protein level).

The protein localises to the cell membrane. It localises to the synaptic cell membrane. The protein resides in the endoplasmic reticulum membrane. It is found in the golgi apparatus membrane. Its subcellular location is the cell surface. The protein localises to the secreted. Its function is as follows. May function as a growth and differentiation factor involved in neuritogenesis. May induce ERBB3 activation. The sequence is that of Chondroitin sulfate proteoglycan 5 (Cspg5) from Rattus norvegicus (Rat).